The primary structure comprises 516 residues: DNA topoisomerase large subunit (516 aa).

Position 128–136 (128–136 (VTGGMNGVG)) interacts with ATP. The DNA-binding element occupies 369–400 (AALARKLAAEKAAETKAAKKASKAKVHKHIKA).

This sequence belongs to the type II topoisomerase family. Part of the DNA topoisomerase complex made of gp39, gp52 and gp60. Mg(2+) serves as cofactor.

The enzyme catalyses ATP-dependent breakage, passage and rejoining of double-stranded DNA.. Its function is as follows. Large subunit of the DNA topoisomerase that untwists superhelical DNA. Controls of topological states of double-stranded DNA by transient breakage and subsequent rejoining of DNA strands. This Escherichia coli (Bacteriophage T4) protein is DNA topoisomerase large subunit (39).